The chain runs to 466 residues: Glutamate decarboxylase beta (466 aa).

Residues Thr-62 and Asn-83 each coordinate substrate. Pyridoxal 5'-phosphate is bound by residues 126 to 127 (SS), Thr-212, and His-275. Lys-276 is subject to N6-(pyridoxal phosphate)lysine. Residues Lys-446, Lys-453, and Lys-464 each carry the N6-acetyllysine modification.

This sequence belongs to the group II decarboxylase family. As to quaternary structure, homohexamer composed of three dimers. It depends on pyridoxal 5'-phosphate as a cofactor.

It catalyses the reaction L-glutamate + H(+) = 4-aminobutanoate + CO2. Converts glutamate to gamma-aminobutyrate (GABA), consuming one intracellular proton in the reaction. The gad system helps to maintain a near-neutral intracellular pH when cells are exposed to extremely acidic conditions. The ability to survive transit through the acidic conditions of the stomach is essential for successful colonization of the mammalian host by commensal and pathogenic bacteria. This is Glutamate decarboxylase beta (gadB) from Escherichia coli O6:H1 (strain CFT073 / ATCC 700928 / UPEC).